The following is a 146-amino-acid chain: D-aminoacyl-tRNA deacylase (146 aa).

Positions 138-139 (GP) match the Gly-cisPro motif, important for rejection of L-amino acids motif.

The protein belongs to the DTD family. In terms of assembly, homodimer.

Its subcellular location is the cytoplasm. The enzyme catalyses glycyl-tRNA(Ala) + H2O = tRNA(Ala) + glycine + H(+). It carries out the reaction a D-aminoacyl-tRNA + H2O = a tRNA + a D-alpha-amino acid + H(+). An aminoacyl-tRNA editing enzyme that deacylates mischarged D-aminoacyl-tRNAs. Also deacylates mischarged glycyl-tRNA(Ala), protecting cells against glycine mischarging by AlaRS. Acts via tRNA-based rather than protein-based catalysis; rejects L-amino acids rather than detecting D-amino acids in the active site. By recycling D-aminoacyl-tRNA to D-amino acids and free tRNA molecules, this enzyme counteracts the toxicity associated with the formation of D-aminoacyl-tRNA entities in vivo and helps enforce protein L-homochirality. The sequence is that of D-aminoacyl-tRNA deacylase from Xanthomonas euvesicatoria pv. vesicatoria (strain 85-10) (Xanthomonas campestris pv. vesicatoria).